The primary structure comprises 109 residues: Probable WRKY transcription factor 43 (109 aa).

Positions 24 to 89 form a DNA-binding region, WRKY; the sequence is SDADILDDGY…YEGIHNHPCE (66 aa).

The protein belongs to the WRKY group II-c family.

Its subcellular location is the nucleus. Functionally, transcription factor. Interacts specifically with the W box (5'-(T)TGAC[CT]-3'), a frequently occurring elicitor-responsive cis-acting element. This Arabidopsis thaliana (Mouse-ear cress) protein is Probable WRKY transcription factor 43 (WRKY43).